A 743-amino-acid chain; its full sequence is Peptide transporter family 1 (743 aa).

The tract at residues M1 to P28 is disordered. Over residues N7–N16 the composition is skewed to low complexity. 10 helical membrane passes run V74–A94, I104–P124, A132–V152, F173–I193, F207–A227, V334–A354, L364–L384, L597–Y619, V629–A649, and G659–A679.

It belongs to the major facilitator superfamily. Proton-dependent oligopeptide transporter (POT/PTR) (TC 2.A.17) family. As to expression, expressed in thorax and abdomen of females: apical epithelial membranes of midgut, rectum, and reproductive tract. Also expressed in neuropil of the central nervous system, with elevated expression within the alpha- and beta-lobes of the mushroom bodies.

The protein localises to the membrane. In terms of biological role, important role in absorption of dietary peptides. High-affinity transporter of alanylalanine. Dipeptide transport activity is proton dependent. This is Peptide transporter family 1 (yin) from Drosophila melanogaster (Fruit fly).